The primary structure comprises 644 residues: Pesticidal crystal protein Cry3Aa (644 aa).

Over residues 1-13 (MNPNNRSEHDTIK) the composition is skewed to basic and acidic residues. The tract at residues 1-20 (MNPNNRSEHDTIKTTENNEV) is disordered. Residues 1–57 (MNPNNRSEHDTIKTTENNEVPTNHVQYPLAETPNPTLEDLNYKEFLRMTADNNTEAL) constitute a propeptide, removed in mature form.

It belongs to the delta endotoxin family.

Its function is as follows. Promotes colloidosmotic lysis by binding to the midgut epithelial cells of Coleoptera. This Bacillus thuringiensis subsp. san diego protein is Pesticidal crystal protein Cry3Aa (cry3Aa).